The following is a 357-amino-acid chain: Protein Wnt-8c (357 aa).

A signal peptide spans 1–16; the sequence is MRGSTFLLLSIVGIYG. Cysteines 55 and 66 form a disulfide. N104 carries N-linked (GlcNAc...) asparagine glycosylation. 9 cysteine pairs are disulfide-bonded: C105–C113, C115–C133, C181–C195, C183–C190, C260–C298, C276–C291, C313–C328, C315–C325, and C320–C321. A lipid anchor (O-palmitoleoyl serine) is attached at S187. 2 N-linked (GlcNAc...) asparagine glycosylation sites follow: N263 and N282. N-linked (GlcNAc...) asparagine glycosylation is present at N346.

This sequence belongs to the Wnt family. Post-translationally, palmitoleoylation is required for efficient binding to frizzled receptors. Depalmitoleoylation leads to Wnt signaling pathway inhibition. Proteolytic processing by tiki1 and tiki2 promotes oxidation and formation of large disulfide-bond oligomers, leading to inactivation of wnt8c. As to expression, cells that form rhombomere 4. Hensen node and the neural plate immediately anterior to it.

Its subcellular location is the secreted. The protein localises to the extracellular space. The protein resides in the extracellular matrix. Ligand for members of the frizzled family of seven transmembrane receptors. Probable developmental protein. Is likely to signal over only few cell diameters. May be involved in the regulation of axis formation and in the rhombomere specification. The sequence is that of Protein Wnt-8c (WNT8C) from Gallus gallus (Chicken).